The chain runs to 87 residues: DNA-directed RNA polymerase subunit omega (87 aa).

This sequence belongs to the RNA polymerase subunit omega family. The RNAP catalytic core consists of 2 alpha, 1 beta, 1 beta' and 1 omega subunit. When a sigma factor is associated with the core the holoenzyme is formed, which can initiate transcription.

It catalyses the reaction RNA(n) + a ribonucleoside 5'-triphosphate = RNA(n+1) + diphosphate. In terms of biological role, promotes RNA polymerase assembly. Latches the N- and C-terminal regions of the beta' subunit thereby facilitating its interaction with the beta and alpha subunits. The chain is DNA-directed RNA polymerase subunit omega from Pseudomonas fluorescens (strain Pf0-1).